The sequence spans 62 residues: Large ribosomal subunit protein bL28 (62 aa).

Belongs to the bacterial ribosomal protein bL28 family.

In Ruminiclostridium cellulolyticum (strain ATCC 35319 / DSM 5812 / JCM 6584 / H10) (Clostridium cellulolyticum), this protein is Large ribosomal subunit protein bL28.